Reading from the N-terminus, the 126-residue chain is Nucleoside diphosphate kinase B (126 aa).

ATP is bound by residues Lys6, Phe37, Thr68, Arg79, and Asn89. Residue His92 is the Pros-phosphohistidine intermediate of the active site.

It belongs to the NDK family. Mg(2+) is required as a cofactor.

It localises to the cytoplasm. The protein resides in the nucleus. It is found in the cell projection. Its subcellular location is the lamellipodium. The protein localises to the ruffle. The catalysed reaction is a 2'-deoxyribonucleoside 5'-diphosphate + ATP = a 2'-deoxyribonucleoside 5'-triphosphate + ADP. It carries out the reaction a ribonucleoside 5'-diphosphate + ATP = a ribonucleoside 5'-triphosphate + ADP. Major role in the synthesis of nucleoside triphosphates other than ATP. This is Nucleoside diphosphate kinase B (nme2) from Macruronus magellanicus (Patagonian grenadier).